A 400-amino-acid chain; its full sequence is Endoplasmin (400 aa).

At Lys-1 the chain carries N6-succinyllysine. N-linked (GlcNAc...) asparagine glycosylation occurs at Asn-42. The residue at position 44 (Ser-44) is a Phosphoserine. Lys-76 is modified (N6-acetyllysine). N-linked (GlcNAc...) asparagine glycans are attached at residues Asn-78 and Asn-99. Lys-230 is subject to N6-succinyllysine. A disordered region spans residues Ile-346–Leu-400. Acidic residues predominate over residues Ala-350–Gln-387. The residue at position 379 (Thr-379) is a Phosphothreonine. A compositionally biased stretch (basic and acidic residues) spans Glu-388–Leu-400. The short motif at Lys-397–Leu-400 is the Prevents secretion from ER element.

Belongs to the heat shock protein 90 family. As to quaternary structure, homodimer; disulfide-linked. Component of an EIF2 complex at least composed of CELF1/CUGBP1, CALR, CALR3, EIF2S1, EIF2S2, HSP90B1 and HSPA5. Part of a large chaperone multiprotein complex comprising DNAJB11, HSP90B1, HSPA5, HYOU, PDIA2, PDIA4, PDIA6, PPIB, SDF2L1, UGGT1 and very small amounts of ERP29, but not, or at very low levels, CALR nor CANX. Interacts with AIMP1; regulates its retention in the endoplasmic reticulum. Hyperglycosylated form interacts with OS9; promoting its degradation by the endoplasmic reticulum associated degradation (ERAD). Interacts with CNPY3. This interaction is disrupted in the presence of ATP. Interacts with TLR4 and TLR9, but not with TLR3. Interacts with MZB1 in a calcium-dependent manner. Interacts with METTL23. Interacts with IL1B; the interaction facilitates cargo translocation into the ERGIC. Interacts with EIF2AK3. Phosphorylated by CK2. Post-translationally, N-glycosylated cotranslationally at Asn-217 by STT3A-containing OST-A complex: this glycosylation is constitutive. In response to various stress, 5 additional facultative sites (Asn-62, Asn-107, Asn-445, Asn-481 and Asn-502) can be glycosylated post-translationally by STT3B-containing OST-B complex, leading to a hyperglycosylated form that is degraded by the ER-associated degradation (ERAD) pathway. In normal conditions, the OST-A complex together with CCDC134 prevent glycosylation at facultative sites during protein folding, thereby preventing hyperglycosylation. Mechanistically, nascent HSP90B1 is tethered during translation to a specialized CCDC134-containing translocon that forms a microenvironment for its folding, in which STT3A associates with the SRT pseudosubstrate motif, and prevents access to facultative glycosylation sites until folding is completed, rendering its facultative sites inaccessible to the OST-B complex.

Its subcellular location is the endoplasmic reticulum lumen. It localises to the sarcoplasmic reticulum lumen. The protein resides in the melanosome. It catalyses the reaction ATP + H2O = ADP + phosphate + H(+). In terms of biological role, ATP-dependent chaperone involved in the processing of proteins in the endoplasmic reticulum, regulating their transport. Together with MESD, acts as a modulator of the Wnt pathway by promoting the folding of LRP6, a coreceptor of the canonical Wnt pathway. When associated with CNPY3, required for proper folding of Toll-like receptors. Promotes folding and trafficking of TLR4 to the cell surface. May participate in the unfolding of cytosolic leaderless cargos (lacking the secretion signal sequence) such as the interleukin 1/IL-1 to facilitate their translocation into the ERGIC (endoplasmic reticulum-Golgi intermediate compartment) and secretion; the translocation process is mediated by the cargo receptor TMED10. The protein is Endoplasmin (HSP90B1) of Mesocricetus auratus (Golden hamster).